The primary structure comprises 382 residues: Bifunctional enzyme IspD/IspF (382 aa).

The segment at methionine 1–arginine 225 is 2-C-methyl-D-erythritol 4-phosphate cytidylyltransferase. The interval arginine 225 to isoleucine 382 is 2-C-methyl-D-erythritol 2,4-cyclodiphosphate synthase. Residues aspartate 231 and histidine 233 each coordinate a divalent metal cation. 4-CDP-2-C-methyl-D-erythritol 2-phosphate-binding positions include aspartate 231–histidine 233 and histidine 257–serine 258. Residue histidine 265 participates in a divalent metal cation binding. 4-CDP-2-C-methyl-D-erythritol 2-phosphate contacts are provided by residues aspartate 279–glycine 281, threonine 355–glutamate 358, phenylalanine 362, and arginine 365.

In the N-terminal section; belongs to the IspD/TarI cytidylyltransferase family. IspD subfamily. It in the C-terminal section; belongs to the IspF family. A divalent metal cation serves as cofactor.

It carries out the reaction 2-C-methyl-D-erythritol 4-phosphate + CTP + H(+) = 4-CDP-2-C-methyl-D-erythritol + diphosphate. The enzyme catalyses 4-CDP-2-C-methyl-D-erythritol 2-phosphate = 2-C-methyl-D-erythritol 2,4-cyclic diphosphate + CMP. The protein operates within isoprenoid biosynthesis; isopentenyl diphosphate biosynthesis via DXP pathway; isopentenyl diphosphate from 1-deoxy-D-xylulose 5-phosphate: step 2/6. It participates in isoprenoid biosynthesis; isopentenyl diphosphate biosynthesis via DXP pathway; isopentenyl diphosphate from 1-deoxy-D-xylulose 5-phosphate: step 4/6. Its function is as follows. Bifunctional enzyme that catalyzes the formation of 4-diphosphocytidyl-2-C-methyl-D-erythritol from CTP and 2-C-methyl-D-erythritol 4-phosphate (MEP) (IspD), and catalyzes the conversion of 4-diphosphocytidyl-2-C-methyl-D-erythritol 2-phosphate (CDP-ME2P) to 2-C-methyl-D-erythritol 2,4-cyclodiphosphate (ME-CPP) with a corresponding release of cytidine 5-monophosphate (CMP) (IspF). The protein is Bifunctional enzyme IspD/IspF of Rhizorhabdus wittichii (strain DSM 6014 / CCUG 31198 / JCM 15750 / NBRC 105917 / EY 4224 / RW1) (Sphingomonas wittichii).